The sequence spans 348 residues: Phosphatidylinositol 3,4,5-trisphosphate 3-phosphatase ptn1 (348 aa).

Residues 18–189 (EKVNRSFAYL…YYIEILKQFP (172 aa)) form the Phosphatase tensin-type domain. The active-site Phosphocysteine intermediate is Cys129.

The protein resides in the cytoplasmic vesicle. It carries out the reaction a 1,2-diacyl-sn-glycero-3-phospho-(1D-myo-inositol-3,4,5-trisphosphate) + H2O = a 1,2-diacyl-sn-glycero-3-phospho-(1D-myo-inositol-4,5-bisphosphate) + phosphate. The enzyme catalyses 1,2-dioctanoyl-sn-glycero-3-phospho-(1D-myo-inositol-3,4,5-trisphosphate) + H2O = 1,2-dioctanoyl-sn-glycero-3-phospho-(1D-myo-inositol-4,5-bisphosphate) + phosphate. The catalysed reaction is 1,2-dihexadecanoyl-sn-glycero-3-phospho-(1D-myo-inositol-3,4,5-trisphosphate) + H2O = 1,2-dihexadecanoyl-sn-glycero-3-phospho-(1D-myo-inositol-4,5-bisphosphate) + phosphate. Acts as a phosphoinositide 3-phosphatase and regulates PtdIns(3,4,5)P3 levels. The sequence is that of Phosphatidylinositol 3,4,5-trisphosphate 3-phosphatase ptn1 (ptn1) from Schizosaccharomyces pombe (strain 972 / ATCC 24843) (Fission yeast).